The following is a 404-amino-acid chain: Cytoplasmic tRNA 2-thiolation protein 2 (404 aa).

The protein belongs to the CTU2/NCS2 family.

It localises to the cytoplasm. It participates in tRNA modification; 5-methoxycarbonylmethyl-2-thiouridine-tRNA biosynthesis. Plays a central role in 2-thiolation of mcm(5)S(2)U at tRNA wobble positions of tRNA(Lys), tRNA(Glu) and tRNA(Gln). May act by forming a heterodimer with NCS6/CTU1 that ligates sulfur from thiocarboxylated URM1 onto the uridine of tRNAs at wobble position. This chain is Cytoplasmic tRNA 2-thiolation protein 2, found in Drosophila mojavensis (Fruit fly).